Consider the following 46-residue polypeptide: Photosystem II reaction center protein K (46 aa).

The propeptide occupies 1 to 9 (MLTLLNTFA). The chain crosses the membrane as a helical span at residues 25–45 (LPLIPLFFFLLVFVWQAAVGF).

The protein belongs to the PsbK family. PSII is composed of 1 copy each of membrane proteins PsbA, PsbB, PsbC, PsbD, PsbE, PsbF, PsbH, PsbI, PsbJ, PsbK, PsbL, PsbM, PsbT, PsbX, PsbY, Psb30/Ycf12, peripheral proteins PsbO, CyanoQ (PsbQ), PsbU, PsbV and a large number of cofactors. It forms dimeric complexes.

Its subcellular location is the cellular thylakoid membrane. In terms of biological role, one of the components of the core complex of photosystem II (PSII). PSII is a light-driven water:plastoquinone oxidoreductase that uses light energy to abstract electrons from H(2)O, generating O(2) and a proton gradient subsequently used for ATP formation. It consists of a core antenna complex that captures photons, and an electron transfer chain that converts photonic excitation into a charge separation. The chain is Photosystem II reaction center protein K from Prochlorococcus marinus (strain MIT 9515).